A 70-amino-acid polypeptide reads, in one-letter code: MPGIKVHPNESFDEAYRKFKKQVDRNLIVTEVRARRFFEPMTEIRKKQKISARKKMLKRLYMLRRYESRL.

This sequence belongs to the bacterial ribosomal protein bS21 family.

This chain is Small ribosomal subunit protein bS21, found in Campylobacter curvus (strain 525.92).